Reading from the N-terminus, the 777-residue chain is Myotubularin-related protein 10 (777 aa).

The disordered stretch occupies residues 196-217 (PSGDGGGGGGGGNGAGGGSSQK). Positions 197 to 214 (SGDGGGGGGGGNGAGGGS) are enriched in gly residues. Residues 221–661 (FETYSDWDRE…THIKLWKLCY (441 aa)) enclose the Myotubularin phosphatase domain. A phosphoserine mark is found at serine 607 and serine 751.

It belongs to the protein-tyrosine phosphatase family. Non-receptor class myotubularin subfamily.

In Homo sapiens (Human), this protein is Myotubularin-related protein 10 (MTMR10).